The primary structure comprises 767 residues: Protein transport protein Sec23B (767 aa).

An N-acetylalanine modification is found at Ala2. Zn(2+)-binding residues include Cys61, Cys66, Cys85, and Cys88. Residue Lys564 is modified to N6-acetyllysine. Residues 634–720 (PEPVLLDSSS…EHGGSQARFL (87 aa)) form a Gelsolin-like repeat.

The protein belongs to the SEC23/SEC24 family. SEC23 subfamily. As to quaternary structure, COPII is composed of at least five proteins: the Sec23/24 complex, the Sec13/31 complex and Sar1. Interacts with SAR1A. In terms of tissue distribution, ubiquitously expressed.

The protein resides in the cytoplasmic vesicle. It is found in the COPII-coated vesicle membrane. Its subcellular location is the endoplasmic reticulum membrane. It localises to the cytoplasm. The protein localises to the cytosol. Component of the coat protein complex II (COPII) which promotes the formation of transport vesicles from the endoplasmic reticulum (ER). The coat has two main functions, the physical deformation of the endoplasmic reticulum membrane into vesicles and the selection of cargo molecules for their transport to the Golgi complex. This chain is Protein transport protein Sec23B, found in Homo sapiens (Human).